Here is a 601-residue protein sequence, read N- to C-terminus: Glutamine--fructose-6-phosphate aminotransferase [isomerizing] (601 aa).

The active-site Nucleophile; for GATase activity is the cysteine 2. The Glutamine amidotransferase type-2 domain occupies 2–214 (CGITGYIGTD…NGDIAHLTET (213 aa)). SIS domains are found at residues 281–420 (STET…ARNA) and 453–591 (IGRE…IDKP). Catalysis depends on lysine 596, which acts as the For Fru-6P isomerization activity.

Homodimer.

The protein localises to the cytoplasm. It catalyses the reaction D-fructose 6-phosphate + L-glutamine = D-glucosamine 6-phosphate + L-glutamate. Functionally, catalyzes the first step in hexosamine metabolism, converting fructose-6P into glucosamine-6P using glutamine as a nitrogen source. The polypeptide is Glutamine--fructose-6-phosphate aminotransferase [isomerizing] (Halobacterium salinarum (strain ATCC 700922 / JCM 11081 / NRC-1) (Halobacterium halobium)).